Consider the following 729-residue polypeptide: Fatty acid oxidation complex subunit alpha (729 aa).

Positions 1 to 189 (MLYKGDTLYL…KIGLVDGVVK (189 aa)) are enoyl-CoA hydratase/isomerase. A substrate-binding site is contributed by Asp296. Residues 311-729 (ETPKQAAVLG…ARPVGSLKTA (419 aa)) are 3-hydroxyacyl-CoA dehydrogenase. NAD(+) contacts are provided by residues Met324, Asp343, 400 to 402 (VVE), Lys407, and Ser429. The active-site For 3-hydroxyacyl-CoA dehydrogenase activity is the His450. Asn453 provides a ligand contact to NAD(+). Positions 500 and 660 each coordinate substrate. The tract at residues 708–729 (RHNEPYYPPVEPARPVGSLKTA) is disordered.

It in the N-terminal section; belongs to the enoyl-CoA hydratase/isomerase family. This sequence in the C-terminal section; belongs to the 3-hydroxyacyl-CoA dehydrogenase family. As to quaternary structure, heterotetramer of two alpha chains (FadB) and two beta chains (FadA).

The enzyme catalyses a (3S)-3-hydroxyacyl-CoA + NAD(+) = a 3-oxoacyl-CoA + NADH + H(+). It catalyses the reaction a (3S)-3-hydroxyacyl-CoA = a (2E)-enoyl-CoA + H2O. It carries out the reaction a 4-saturated-(3S)-3-hydroxyacyl-CoA = a (3E)-enoyl-CoA + H2O. The catalysed reaction is (3S)-3-hydroxybutanoyl-CoA = (3R)-3-hydroxybutanoyl-CoA. The enzyme catalyses a (3Z)-enoyl-CoA = a 4-saturated (2E)-enoyl-CoA. It catalyses the reaction a (3E)-enoyl-CoA = a 4-saturated (2E)-enoyl-CoA. It functions in the pathway lipid metabolism; fatty acid beta-oxidation. Its function is as follows. Involved in the aerobic and anaerobic degradation of long-chain fatty acids via beta-oxidation cycle. Catalyzes the formation of 3-oxoacyl-CoA from enoyl-CoA via L-3-hydroxyacyl-CoA. It can also use D-3-hydroxyacyl-CoA and cis-3-enoyl-CoA as substrate. In Salmonella agona (strain SL483), this protein is Fatty acid oxidation complex subunit alpha.